The chain runs to 97 residues: MTKYEILYIIRPNIDEEAKTALVERFDAILTENGAANLESKDWEKRKLAYEINDFREGIYHIATFEAETTSEALSEFDRLAKINLDILRHMIVKVEA.

This sequence belongs to the bacterial ribosomal protein bS6 family.

Binds together with bS18 to 16S ribosomal RNA. The polypeptide is Small ribosomal subunit protein bS6 (Lactococcus lactis subsp. cremoris (strain MG1363)).